Here is a 472-residue protein sequence, read N- to C-terminus: Clampless protein 1 (472 aa).

Asn-70 and Asn-296 each carry an N-linked (GlcNAc...) asparagine glycan.

Functionally, required for developmental progression after cells of opposite mating types fuse with one another, essential for processes common to both dikaryotic filament formation and monokaryotic fruiting. A direct target for transcription factors Sxi1-alpha and Sxi2-a. The protein is Clampless protein 1 of Cryptococcus neoformans var. neoformans serotype D (strain B-3501A) (Filobasidiella neoformans).